The sequence spans 1426 residues: DNA-directed RNA polymerase subunit beta' (1426 aa).

The Zn(2+) site is built by cysteine 71, cysteine 73, cysteine 86, and cysteine 89. Residues aspartate 461, aspartate 463, and aspartate 465 each coordinate Mg(2+). 4 residues coordinate Zn(2+): cysteine 814, cysteine 888, cysteine 895, and cysteine 898. Positions 1392–1426 are disordered; sequence ADPIAAAESAIGLGGGEQPATSETGAGGSDPSEEG.

This sequence belongs to the RNA polymerase beta' chain family. As to quaternary structure, the RNAP catalytic core consists of 2 alpha, 1 beta, 1 beta' and 1 omega subunit. When a sigma factor is associated with the core the holoenzyme is formed, which can initiate transcription. Mg(2+) is required as a cofactor. Zn(2+) serves as cofactor.

The enzyme catalyses RNA(n) + a ribonucleoside 5'-triphosphate = RNA(n+1) + diphosphate. Its function is as follows. DNA-dependent RNA polymerase catalyzes the transcription of DNA into RNA using the four ribonucleoside triphosphates as substrates. This is DNA-directed RNA polymerase subunit beta' from Alkalilimnicola ehrlichii (strain ATCC BAA-1101 / DSM 17681 / MLHE-1).